Reading from the N-terminus, the 271-residue chain is MSSLFISLPWVAFIWLALLGAVGGARVQGPMRGSAALTCAITPRADIVSVTWQKRQLPGPVNVATYSHSYGVVVQTQYRHKANITCPGLWNSTLVIHNLAVDDEGCYLCIFNSFGGRQVSCTACLEVTSPPTGHVQVNSTEDADTVTCLATGRPPPNVTWAAPWNNASSTQEQFTDSDGLTVAWRTVRLPRGDNTTPSEGICLITWGNESISIPASIQGPLAHDLPAAQGTLAGVAITLVGLFGIFALHHCRRKQGGASPTSDDMDPLSTQ.

An N-terminal signal peptide occupies residues 1–24 (MSSLFISLPWVAFIWLALLGAVGG). The Extracellular segment spans residues 25 to 227 (ARVQGPMRGS…QGPLAHDLPA (203 aa)). Residues 26–129 (RVQGPMRGSA…SCTACLEVTS (104 aa)) form the Ig-like V-type domain. Residues cysteine 39 and cysteine 109 are joined by a disulfide bond. N-linked (GlcNAc...) asparagine; by host glycans are attached at residues asparagine 83, asparagine 91, asparagine 138, asparagine 157, asparagine 166, and asparagine 208. Positions 130–220 (PPTGHVQVNS…ISIPASIQGP (91 aa)) constitute an Ig-like C2-type domain. An intrachain disulfide couples cysteine 148 to cysteine 202. A helical transmembrane segment spans residues 228–248 (AQGTLAGVAITLVGLFGIFAL). At 249–271 (HHCRRKQGGASPTSDDMDPLSTQ) the chain is on the cytoplasmic side.

In terms of assembly, interacts with human CD200R1. Post-translationally, N-glycosylated.

The protein resides in the host cell membrane. Functionally, dramatically stimulates primary monocytes, macrophages, and dendritic cells to produce the inflammatory cytokines interleukin 1-beta, IL-6, monocyte chemoattractant protein 1, and TNF-alpha. The induction of inflammatory cytokine production potentially promotes the cytokine-mediated angiogenic proliferation of KSHV-infected cells. This Human herpesvirus 8 type P (isolate GK18) (HHV-8) protein is OX-2 membrane glycoprotein homolog (K14).